Reading from the N-terminus, the 153-residue chain is UPF0768 protein PB2B2.18 (153 aa).

It belongs to the UPF0768 family.

This is UPF0768 protein PB2B2.18 from Schizosaccharomyces pombe (strain 972 / ATCC 24843) (Fission yeast).